The primary structure comprises 321 residues: Lipoyl synthase (321 aa).

The [4Fe-4S] cluster site is built by Cys68, Cys73, Cys79, Cys94, Cys98, Cys101, and Ser308. Residues 80–297 (FNHGTATFMI…KVIALELGFT (218 aa)) form the Radical SAM core domain.

This sequence belongs to the radical SAM superfamily. Lipoyl synthase family. [4Fe-4S] cluster serves as cofactor.

The protein resides in the cytoplasm. The catalysed reaction is [[Fe-S] cluster scaffold protein carrying a second [4Fe-4S](2+) cluster] + N(6)-octanoyl-L-lysyl-[protein] + 2 oxidized [2Fe-2S]-[ferredoxin] + 2 S-adenosyl-L-methionine + 4 H(+) = [[Fe-S] cluster scaffold protein] + N(6)-[(R)-dihydrolipoyl]-L-lysyl-[protein] + 4 Fe(3+) + 2 hydrogen sulfide + 2 5'-deoxyadenosine + 2 L-methionine + 2 reduced [2Fe-2S]-[ferredoxin]. The protein operates within protein modification; protein lipoylation via endogenous pathway; protein N(6)-(lipoyl)lysine from octanoyl-[acyl-carrier-protein]: step 2/2. In terms of biological role, catalyzes the radical-mediated insertion of two sulfur atoms into the C-6 and C-8 positions of the octanoyl moiety bound to the lipoyl domains of lipoate-dependent enzymes, thereby converting the octanoylated domains into lipoylated derivatives. This Aliivibrio salmonicida (strain LFI1238) (Vibrio salmonicida (strain LFI1238)) protein is Lipoyl synthase.